Here is a 621-residue protein sequence, read N- to C-terminus: Phosphoenolpyruvate carboxykinase [GTP] (621 aa).

Substrate is bound by residues Arg82 and 220 to 222; that span reads YGG. 2 residues coordinate Mn(2+): Lys229 and His249. Residue Ser271 coordinates substrate. 272-277 is a binding site for GTP; the sequence is QCGKTN. Residue Cys273 is part of the active site. Asp296 is a Mn(2+) binding site. Residue 386–388 coordinates substrate; sequence NSR. Residues Arg388, Arg419, and 514–517 contribute to the GTP site; that span reads FGEN.

This sequence belongs to the phosphoenolpyruvate carboxykinase [GTP] family. Monomer. Requires Mn(2+) as cofactor.

Its subcellular location is the cytoplasm. It carries out the reaction oxaloacetate + GTP = phosphoenolpyruvate + GDP + CO2. Its pathway is carbohydrate biosynthesis; gluconeogenesis. Functionally, catalyzes the conversion of oxaloacetate (OAA) to phosphoenolpyruvate (PEP), the rate-limiting step in the metabolic pathway that produces glucose from lactate and other precursors derived from the citric acid cycle. This Corynebacterium kroppenstedtii (strain DSM 44385 / JCM 11950 / CIP 105744 / CCUG 35717) protein is Phosphoenolpyruvate carboxykinase [GTP].